The following is a 124-amino-acid chain: Small ribosomal subunit protein uS12c (124 aa).

Disordered regions lie at residues Met-1–Pro-28 and Ala-104–Thr-124. Composition is skewed to basic residues over residues Glu-11 to Lys-20 and Asp-109 to Thr-124.

Belongs to the universal ribosomal protein uS12 family. As to quaternary structure, part of the 30S ribosomal subunit.

Its subcellular location is the plastid. The protein localises to the chloroplast. Functionally, with S4 and S5 plays an important role in translational accuracy. Located at the interface of the 30S and 50S subunits. The polypeptide is Small ribosomal subunit protein uS12c (rps12) (Gracilaria tenuistipitata var. liui (Red alga)).